The primary structure comprises 457 residues: Glutamate--tRNA ligase 2 (457 aa).

The short motif at 8–18 is the 'HIGH' region element; it reads PSPTGYIHIGN. The 'KMSKS' region motif lies at 249–253; that stretch reads GFSKR. Lys-252 is a binding site for ATP.

Belongs to the class-I aminoacyl-tRNA synthetase family. Glutamate--tRNA ligase type 1 subfamily. Monomer.

It is found in the cytoplasm. The catalysed reaction is tRNA(Glu) + L-glutamate + ATP = L-glutamyl-tRNA(Glu) + AMP + diphosphate. Functionally, catalyzes the attachment of glutamate to tRNA(Glu) in a two-step reaction: glutamate is first activated by ATP to form Glu-AMP and then transferred to the acceptor end of tRNA(Glu). In Bartonella tribocorum (strain CIP 105476 / IBS 506), this protein is Glutamate--tRNA ligase 2.